The sequence spans 386 residues: L-prolyl-[peptidyl-carrier protein] dehydrogenase (386 aa).

FAD-binding positions include 125–134 (NAATEPDAGS) and 158–160 (FIT). The active-site Proton acceptor is the Glu-244. FAD is bound by residues Arg-270, Gln-281, 338–342 (QTFGG), and 367–369 (TND).

It belongs to the acyl-CoA dehydrogenase family. FAD serves as cofactor.

It catalyses the reaction L-prolyl-[peptidyl-carrier protein] + 2 oxidized [electron-transfer flavoprotein] + H(+) = (1H-pyrrole-2-carbonyl)-[peptidyl-carrier protein] + 2 reduced [electron-transfer flavoprotein]. The protein operates within antibiotic biosynthesis; prodigiosin biosynthesis. Involved in the biosynthesis of 4-methoxy-2,2'-bipyrrole-5-carbaldehyde (MBC), one of the terminal products involved in the biosynthesis of the red antibiotic prodigiosin (Pig). Catalyzes the desaturation of the L-prolyl-[PigG] to yield 1H-pyrrole-2-carbonyl-[PigG]. The chain is L-prolyl-[peptidyl-carrier protein] dehydrogenase from Serratia sp. (strain ATCC 39006) (Prodigiosinella confusarubida).